The sequence spans 283 residues: MKQYLDLCQRIVNDGTWIENERTGKRCLTVINADLEYDVGNNQFPLVTTRKSFWKAAVAELLGYIRGYDNAEDFRKLGTKTWDANSNLNEAWLNNPYRKGEDDMGRVYGVQGRAWAKPDGGHIDQLKKIVDDLTNGIDDRGEILNFYNPGEFHMGCLRPCMYSHHFSLLGDTLYLNSTQRSCDVPLGLNFNMVQVYVFLAIMAQITGKKAGVAYHKLVNAHIYEDQLAPMRDIQLKREPLAGPTFHINPEIKSLEDLETWVTMDDFWVEGYECHEAIKYPFSV.

DUMP is bound at residue R22. Residue C160 is the Nucleophile of the active site. Residues 180–183, N191, and 221–223 contribute to the dUMP site; these read RSCD and HIY. (6R)-5,10-methylene-5,6,7,8-tetrahydrofolate is bound at residue D183. S282 is a (6R)-5,10-methylene-5,6,7,8-tetrahydrofolate binding site.

This sequence belongs to the thymidylate synthase family. Bacterial-type ThyA subfamily. Homodimer.

It localises to the cytoplasm. The catalysed reaction is dUMP + (6R)-5,10-methylene-5,6,7,8-tetrahydrofolate = 7,8-dihydrofolate + dTMP. Its pathway is pyrimidine metabolism; dTTP biosynthesis. Functionally, catalyzes the reductive methylation of 2'-deoxyuridine-5'-monophosphate (dUMP) to 2'-deoxythymidine-5'-monophosphate (dTMP) while utilizing 5,10-methylenetetrahydrofolate (mTHF) as the methyl donor and reductant in the reaction, yielding dihydrofolate (DHF) as a by-product. This enzymatic reaction provides an intracellular de novo source of dTMP, an essential precursor for DNA biosynthesis. The protein is Thymidylate synthase of Vibrio atlanticus (strain LGP32) (Vibrio splendidus (strain Mel32)).